The sequence spans 340 residues: Ras association domain-containing protein 1 (340 aa).

Serine 2 bears the N-acetylserine mark. The residue at position 2 (serine 2) is a Phosphoserine. Positions 2 to 115 are mediates interaction with E4F1; that stretch reads SAEPELIELR…DLGWDSALER (114 aa). A Phorbol-ester/DAG-type zinc finger spans residues 51 to 101; that stretch reads GHRFQPAGPTTHTWCDLCGDFIWGVVRKGLQCAHCKFTCHYRCRALVCLDC. Residues 175–185 are compositionally biased toward low complexity; that stretch reads SVPSSKKPPSL. The disordered stretch occupies residues 175 to 196; it reads SVPSSKKPPSLQDARRGTGRST. In terms of domain architecture, Ras-associating spans 194–288; sequence RSTAVKRRTS…LSFVLKENDS (95 aa). One can recognise an SARAH domain in the interval 290 to 337; the sequence is EVNWDAFSMPELHNFLRILQREEEEHLRQILQKYSRCRQKIQEALHAC. The tract at residues 311–314 is MOAP1-binding; that stretch reads EEEE.

Interacts with MAP1S and XPA. Binds to the N-terminal of CDC20 during prometaphase. Binds to STK3/MST2 and STK4/MST1. Recruited to the TNFRSF1A and TNFRSF10A complexes in response to their respective cognate ligand, after internalization. Can self-associate. Part of a complex with MDM2, DAXX, RASSF1 and USP7. In terms of assembly, interacts with MOAP1 and E4F1. Interacts with RSSF5 and probably associates with HRAS via a RSSF1 isoform A-RSSF5 heterodimer. Interacts (via C-terminus) with DAXX (via N-terminus); the interaction is independent of MDM2 and TP53. Interacts (via N-terminus) with MDM2 (via C-terminus); the interaction is independent of TP53. Interacts with RAB39A. Interacts with RAB39B; the interaction is weak. As to quaternary structure, interacts with ECM2. Interacts with RAB39B; the interaction is strong. Does not interact with RAB39A.

Its subcellular location is the cytoplasm. The protein localises to the cytoskeleton. It is found in the microtubule organizing center. The protein resides in the centrosome. It localises to the spindle. Its subcellular location is the spindle pole. The protein localises to the nucleus. Its function is as follows. Potential tumor suppressor. Required for death receptor-dependent apoptosis. Mediates activation of Mediates activation of STK3/MST2 and STK4/MST1 during Fas-induced apoptosis by preventing their dephosphorylation. When associated with MOAP1, promotes BAX conformational change and translocation to mitochondrial membranes in response to TNF and TNFSF10 stimulation. Isoform A interacts with CDC20, an activator of the anaphase-promoting complex, APC, resulting in the inhibition of APC activity and mitotic progression. Inhibits proliferation by negatively regulating cell cycle progression at the level of G1/S-phase transition by regulating accumulation of cyclin D1 protein. Isoform C has been shown not to perform these roles, no function has been identified for this isoform. Isoform A disrupts interactions among MDM2, DAXX and USP7, thus contributing to the efficient activation of TP53 by promoting MDM2 self-ubiquitination in cell-cycle checkpoint control in response to DNA damage. This is Ras association domain-containing protein 1 from Mus musculus (Mouse).